Reading from the N-terminus, the 258-residue chain is Aspartate/glutamate leucyltransferase (258 aa).

The protein belongs to the R-transferase family. Bpt subfamily.

Its subcellular location is the cytoplasm. It catalyses the reaction N-terminal L-glutamyl-[protein] + L-leucyl-tRNA(Leu) = N-terminal L-leucyl-L-glutamyl-[protein] + tRNA(Leu) + H(+). The catalysed reaction is N-terminal L-aspartyl-[protein] + L-leucyl-tRNA(Leu) = N-terminal L-leucyl-L-aspartyl-[protein] + tRNA(Leu) + H(+). Functionally, functions in the N-end rule pathway of protein degradation where it conjugates Leu from its aminoacyl-tRNA to the N-termini of proteins containing an N-terminal aspartate or glutamate. The protein is Aspartate/glutamate leucyltransferase of Bradyrhizobium diazoefficiens (strain JCM 10833 / BCRC 13528 / IAM 13628 / NBRC 14792 / USDA 110).